A 121-amino-acid polypeptide reads, in one-letter code: Two-component response regulator ORR13 (121 aa).

The region spanning 5-121 is the Response regulatory domain; the sequence is HVLVVDDTHV…ADVPRILNYI (117 aa). Residue aspartate 55 is modified to 4-aspartylphosphate.

The protein belongs to the ARR family. Type-A subfamily. Post-translationally, two-component system major event consists of a His-to-Asp phosphorelay between a sensor histidine kinase (HK) and a response regulator (RR). In plants, the His-to-Asp phosphorelay involves an additional intermediate named Histidine-containing phosphotransfer protein (HPt). This multistep phosphorelay consists of a His-Asp-His-Asp sequential transfer of a phosphate group between first a His and an Asp of the HK protein, followed by the transfer to a conserved His of the HPt protein and finally the transfer to an Asp in the receiver domain of the RR protein. Expressed in flowers and panicles.

Functionally, functions as a response regulator involved in His-to-Asp phosphorelay signal transduction system. Phosphorylation of the Asp residue in the receiver domain activates the ability of the protein to promote the transcription of target genes. Type-A response regulators seem to act as negative regulators of the cytokinin signaling. The chain is Two-component response regulator ORR13 from Oryza sativa subsp. japonica (Rice).